The following is a 160-amino-acid chain: Regulatory protein RecX (160 aa).

Belongs to the RecX family.

It localises to the cytoplasm. Modulates RecA activity. The polypeptide is Regulatory protein RecX (Pelodictyon phaeoclathratiforme (strain DSM 5477 / BU-1)).